The following is a 630-amino-acid chain: tRNA uridine 5-carboxymethylaminomethyl modification enzyme MnmG (630 aa).

An FAD-binding site is contributed by 13-18 (GGGHAG). Position 273 to 287 (273 to 287 (GPRYCPSIEDKIHRF)) interacts with NAD(+).

It belongs to the MnmG family. Homodimer. Heterotetramer of two MnmE and two MnmG subunits. FAD is required as a cofactor.

The protein localises to the cytoplasm. NAD-binding protein involved in the addition of a carboxymethylaminomethyl (cmnm) group at the wobble position (U34) of certain tRNAs, forming tRNA-cmnm(5)s(2)U34. The chain is tRNA uridine 5-carboxymethylaminomethyl modification enzyme MnmG from Pseudomonas aeruginosa (strain ATCC 15692 / DSM 22644 / CIP 104116 / JCM 14847 / LMG 12228 / 1C / PRS 101 / PAO1).